The chain runs to 496 residues: MAANCTSSWSLGESCNSPGSEPPQSMPSPATQLGNHDSDPETCHVNFRMFSCPKESDPIQALRKLTELCHLWLRPDLHTKEQILDMLVMEQFMISMPQELQVLVMMNGVQSCKDLEDLLRNNRRPKKWSVVSFLGKEYLMQESDVEMAEAPASVRDDPRHVSSQRTSSVNQMCPEEGQASQELQTLPRVPALFRRQEEDFLLPETTVMKGDPKALRPKPTLEKDLEEDREENPGLTSPEPQLPNSPTGVVGAKEGKEPQKRASVENVDADTPSACVVEREASTHSGSRGDALNLRGLKRSKPDATSISQEEPQGEATPVGNRESPGQAEINPVHSPGPAGPVSHPSGQEVKELLPFACEVCGKRFKYRGKLAVHTRSHTGERLFQCNLCGKRFMQRIGLQFHQRTHTGERPYTCDICQKQFTQKSYLKCHKRSHTGEKPFECKDCKKVFTYKANLKEHQRIHSGEKPHKCSKCPRAFGRPATLRRHQKTHREATSQ.

The segment covering 1–19 (MAANCTSSWSLGESCNSPG) has biased composition (polar residues). The interval 1–38 (MAANCTSSWSLGESCNSPGSEPPQSMPSPATQLGNHDS) is disordered. An SCAN box domain is found at 44-126 (HVNFRMFSCP…DLLRNNRRPK (83 aa)). Disordered regions lie at residues 149-188 (EAPA…TLPR) and 203-347 (PETT…HPSG). The span at 161–171 (VSSQRTSSVNQ) shows a compositional bias: polar residues. Basic and acidic residues predominate over residues 210-223 (GDPKALRPKPTLEK). A compositionally biased stretch (polar residues) spans 234–247 (GLTSPEPQLPNSPT). The segment covering 253 to 263 (KEGKEPQKRAS) has biased composition (basic and acidic residues). C2H2-type zinc fingers lie at residues 356–378 (FACE…TRSH), 384–406 (FQCN…QRTH), 412–434 (YTCD…KRSH), 440–462 (FECK…QRIH), and 468–490 (HKCS…QKTH).

The protein resides in the nucleus. In terms of biological role, may be involved in transcriptional regulation. This is Zinc finger and SCAN domain-containing protein 5C from Homo sapiens (Human).